A 156-amino-acid polypeptide reads, in one-letter code: Probable cyclic pyranopterin monophosphate synthase (156 aa).

Substrate-binding positions include 74-76 and 110-111; these read LCH and ME. Residue Asp125 is part of the active site.

It belongs to the MoaC family. As to quaternary structure, homohexamer; trimer of dimers.

It carries out the reaction (8S)-3',8-cyclo-7,8-dihydroguanosine 5'-triphosphate = cyclic pyranopterin phosphate + diphosphate. It functions in the pathway cofactor biosynthesis; molybdopterin biosynthesis. Its function is as follows. Catalyzes the conversion of (8S)-3',8-cyclo-7,8-dihydroguanosine 5'-triphosphate to cyclic pyranopterin monophosphate (cPMP). This chain is Probable cyclic pyranopterin monophosphate synthase, found in Thermococcus onnurineus (strain NA1).